The chain runs to 654 residues: Probable Xaa-Pro aminopeptidase P (654 aa).

Mn(2+) is bound by residues aspartate 451, aspartate 462, glutamate 560, and glutamate 574.

It belongs to the peptidase M24B family. It depends on Mn(2+) as a cofactor.

It carries out the reaction Release of any N-terminal amino acid, including proline, that is linked to proline, even from a dipeptide or tripeptide.. Functionally, catalyzes the removal of a penultimate prolyl residue from the N-termini of peptides. This chain is Probable Xaa-Pro aminopeptidase P (ampp), found in Botryotinia fuckeliana (strain B05.10) (Noble rot fungus).